We begin with the raw amino-acid sequence, 318 residues long: NADH-ubiquinone oxidoreductase chain 1 (318 aa).

The next 9 helical transmembrane spans lie at 2–22 (FLMNILCLVIPILLAMAFLTL), 37–57 (PNIVGPYGLLQPIADAIKLFI), 69–89 (LMFTLAPTLAFTLALSLWIPM), 100–120 (LGVLFILALSSLAVYSILWSG), 136–156 (VAQTISYEVTLAIILLSIMMM), 171–191 (HMWLIFPLWPLAMMWFISTLA), 231–251 (IIMMNALTTTLFLGAFHNPLF), 253–273 (ELFTVNFITKTLILTMMFLWV), and 293–313 (FLPLTLALCMFHVSMPALSAG).

The protein belongs to the complex I subunit 1 family. In terms of assembly, core subunit of respiratory chain NADH dehydrogenase (Complex I) which is composed of 45 different subunits.

It is found in the mitochondrion inner membrane. It carries out the reaction a ubiquinone + NADH + 5 H(+)(in) = a ubiquinol + NAD(+) + 4 H(+)(out). Core subunit of the mitochondrial membrane respiratory chain NADH dehydrogenase (Complex I) which catalyzes electron transfer from NADH through the respiratory chain, using ubiquinone as an electron acceptor. Essential for the catalytic activity and assembly of complex I. The chain is NADH-ubiquinone oxidoreductase chain 1 (MT-ND1) from Euphractus sexcinctus (Six-banded armadillo).